The primary structure comprises 286 residues: Ribosomal RNA small subunit methyltransferase A (286 aa).

6 residues coordinate S-adenosyl-L-methionine: histidine 11, leucine 13, glycine 44, glutamate 65, aspartate 90, and asparagine 115.

Belongs to the class I-like SAM-binding methyltransferase superfamily. rRNA adenine N(6)-methyltransferase family. RsmA subfamily.

It localises to the cytoplasm. It catalyses the reaction adenosine(1518)/adenosine(1519) in 16S rRNA + 4 S-adenosyl-L-methionine = N(6)-dimethyladenosine(1518)/N(6)-dimethyladenosine(1519) in 16S rRNA + 4 S-adenosyl-L-homocysteine + 4 H(+). Functionally, specifically dimethylates two adjacent adenosines (A1518 and A1519) in the loop of a conserved hairpin near the 3'-end of 16S rRNA in the 30S particle. May play a critical role in biogenesis of 30S subunits. The polypeptide is Ribosomal RNA small subunit methyltransferase A (Nostoc punctiforme (strain ATCC 29133 / PCC 73102)).